Here is a 528-residue protein sequence, read N- to C-terminus: (R)-citramalate synthase (528 aa).

Positions 4 to 266 (VKLYDTTLRD…RECIGDDQLR (263 aa)) constitute a Pyruvate carboxyltransferase domain.

It belongs to the alpha-IPM synthase/homocitrate synthase family.

The catalysed reaction is pyruvate + acetyl-CoA + H2O = (3R)-citramalate + CoA + H(+). It participates in amino-acid biosynthesis; L-isoleucine biosynthesis; 2-oxobutanoate from pyruvate: step 1/3. Functionally, catalyzes the condensation of pyruvate and acetyl-coenzyme A to form (R)-citramalate. Makes part of the main pathway for isoleucine biosynthesis in G.sulfurreducens, i.e. the citramalate-dependent pathway. This chain is (R)-citramalate synthase, found in Geobacter sulfurreducens (strain ATCC 51573 / DSM 12127 / PCA).